The following is a 410-amino-acid chain: Trans-splicing factor Raa2, chloroplastic (410 aa).

Disordered stretches follow at residues 1-40 and 56-106; these read MRTR…QRPA and AADH…QQQV. The transit peptide at 1–46 directs the protein to the chloroplast; that stretch reads MRTRAGAFFGKQRSTSPSGSSTSASRQWLRSSPGRTQRPAAHRVLA. Residues 14–25 show a composition bias toward low complexity; it reads STSPSGSSTSAS. Polar residues predominate over residues 26–35; sequence RQWLRSSPGR. The span at 96–106 shows a compositional bias: low complexity; the sequence is RQAQRRQQQQV.

The protein belongs to the pseudouridine synthase TruB family. As to quaternary structure, possibly associated with other factors required for trans-splicing.

Its subcellular location is the plastid. The protein localises to the chloroplast. Functionally, required for trans-splicing of exons 2 and 3 of the chloroplast encoded psaA mRNA (a group II intron). It is not known if this protein has pseudouridine activity; mutation of the potential active site residue does not cause loss of trans-splicing. The polypeptide is Trans-splicing factor Raa2, chloroplastic (RAA2) (Chlamydomonas reinhardtii (Chlamydomonas smithii)).